Here is a 156-residue protein sequence, read N- to C-terminus: Transcriptional repressor NrdR (156 aa).

A zinc finger lies at 3-34 (CPYCGHLDNKVIDSRINKDATITRRRRSCLAC). One can recognise an ATP-cone domain in the interval 49 to 139 (PMLVKKDGRR…VYRQFKDVDE (91 aa)).

It belongs to the NrdR family. The cofactor is Zn(2+).

Negatively regulates transcription of bacterial ribonucleotide reductase nrd genes and operons by binding to NrdR-boxes. This chain is Transcriptional repressor NrdR, found in Desulfotalea psychrophila (strain LSv54 / DSM 12343).